The chain runs to 423 residues: UDP-N-acetylglucosamine 1-carboxyvinyltransferase 1 (423 aa).

23–24 (KN) is a phosphoenolpyruvate binding site. Arg96 provides a ligand contact to UDP-N-acetyl-alpha-D-glucosamine. Cys120 acts as the Proton donor in catalysis. Cys120 is subject to 2-(S-cysteinyl)pyruvic acid O-phosphothioketal. UDP-N-acetyl-alpha-D-glucosamine contacts are provided by residues 125 to 129 (RPIDL), Asp309, and Val331.

This sequence belongs to the EPSP synthase family. MurA subfamily.

It is found in the cytoplasm. It carries out the reaction phosphoenolpyruvate + UDP-N-acetyl-alpha-D-glucosamine = UDP-N-acetyl-3-O-(1-carboxyvinyl)-alpha-D-glucosamine + phosphate. Its pathway is cell wall biogenesis; peptidoglycan biosynthesis. In terms of biological role, cell wall formation. Adds enolpyruvyl to UDP-N-acetylglucosamine. The sequence is that of UDP-N-acetylglucosamine 1-carboxyvinyltransferase 1 from Streptococcus thermophilus (strain CNRZ 1066).